We begin with the raw amino-acid sequence, 340 residues long: Protein B17 (340 aa).

Belongs to the orthopoxvirus B17 protein family.

The chain is Protein B17 from Vaccinia virus (strain Western Reserve) (VACV).